Here is a 198-residue protein sequence, read N- to C-terminus: MIISAKFITSLVKFDENLSSNFSEVAFLGRSNVGKSSLINSLCKQKNLAKSSATPGKTQLINFFEVICKRNEEKFNINFIDLPGFGYAKVSKNLKEIWNQNLDEFLKLRTSIKLFIHLIDSRHTHLEIDVNLNDYLKRFLRPDQKILKVFTKCDKLNQSEKAKLKNEFKDSILVSNLNKFGLDSLEDIIINQTLGLDK.

One can recognise an EngB-type G domain in the interval 21–195 (NFSEVAFLGR…EDIIINQTLG (175 aa)). GTP-binding positions include 29–36 (GRSNVGKS), 56–60 (GKTQL), 81–84 (DLPG), 151–154 (TKCD), and 174–176 (VSN). Serine 36 and threonine 58 together coordinate Mg(2+).

Belongs to the TRAFAC class TrmE-Era-EngA-EngB-Septin-like GTPase superfamily. EngB GTPase family. The cofactor is Mg(2+).

Its function is as follows. Necessary for normal cell division and for the maintenance of normal septation. In Campylobacter jejuni (strain RM1221), this protein is Probable GTP-binding protein EngB.